Consider the following 706-residue polypeptide: Envelope glycoprotein H (706 aa).

Residues 1-18 (MQLLCVFCLVLLWEVGAA) form the signal peptide. Residues 19-682 (SLSEVKLHLD…LYEERAHVVL (664 aa)) are Virion surface-facing. Asparagine 60 carries an N-linked (GlcNAc...) asparagine; by host glycan. The interaction with gL stretch occupies residues 165-229 (DKFQYTGAMT…QSGDYSLVIV (65 aa)). Residues cysteine 278 and cysteine 335 are joined by a disulfide bond. Asparagine 435 carries an N-linked (GlcNAc...) asparagine; by host glycan. 2 disulfide bridges follow: cysteine 454–cysteine 478 and cysteine 534–cysteine 587. 2 N-linked (GlcNAc...) asparagine; by host glycosylation sites follow: asparagine 549 and asparagine 604. Cysteines 612 and 615 form a disulfide. N-linked (GlcNAc...) asparagine; by host glycosylation is present at asparagine 664. The helical transmembrane segment at 683 to 703 (AIILYFIAFALGIFLVHKIVM) threads the bilayer. The Intravirion segment spans residues 704 to 706 (FFL).

This sequence belongs to the herpesviridae glycoprotein H family. In terms of assembly, interacts with glycoprotein L (gL); this interaction is necessary for the correct processing and cell surface expression of gH. The heterodimer gH/gL seems to interact with gB trimers during fusion. The heterodimer gH/gL interacts with host EPHA2 to facilitate virus internalization and fusion. Interacts with glycoprotein 42/BZLF2. In terms of processing, N-glycosylated, O-glycosylated, and sialylated.

The protein resides in the virion membrane. It is found in the host cell membrane. The protein localises to the host endosome membrane. Functionally, the heterodimer glycoprotein H-glycoprotein L is required for the fusion of viral and plasma membranes leading to virus entry into the host cell. Following initial binding to host receptor, membrane fusion is mediated by the fusion machinery composed of gB and the heterodimer gH/gL. May also be involved in the fusion between the virion envelope and the outer nuclear membrane during virion morphogenesis. The heterodimer gH/gL targets also host EPHA2 to promote viral entry. The chain is Envelope glycoprotein H from Homo sapiens (Human).